Reading from the N-terminus, the 263-residue chain is H-2 class II histocompatibility antigen, A-S beta chain (263 aa).

The signal sequence occupies residues 1–27 (MALQIPSLLLSAAVVVLMVLSSPGTEG). The segment at 28 to 120 (GDSERHFVFQ…VETHTSLRRL (93 aa)) is beta-1. Topologically, residues 28-224 (GDSERHFVFQ…RAQSESARSK (197 aa)) are extracellular. 2 disulfide bridges follow: cysteine 42–cysteine 104 and cysteine 143–cysteine 199. N-linked (GlcNAc...) asparagine glycosylation is present at asparagine 46. Residues 121–214 (EQPNVVISLS…SLKSPITVEW (94 aa)) are beta-2. The Ig-like C1-type domain occupies 123-211 (PNVVISLSRT…EHPSLKSPIT (89 aa)). The interval 215-224 (RAQSESARSK) is connecting peptide. Residues 225–245 (MLSGIGGCVLGVIFLGLGLFI) form a helical membrane-spanning segment. The Cytoplasmic segment spans residues 246–263 (RHRSQKGPRGPPPAGLLQ).

The protein belongs to the MHC class II family. Ubiquitinated in immature dendritic cells leading to down-regulation of MHC class II.

It localises to the membrane. This is H-2 class II histocompatibility antigen, A-S beta chain (H2-Ab1) from Mus musculus (Mouse).